The sequence spans 146 residues: Ribosome maturation factor RimP (146 aa).

The protein belongs to the RimP family.

The protein localises to the cytoplasm. Its function is as follows. Required for maturation of 30S ribosomal subunits. The polypeptide is Ribosome maturation factor RimP (Dechloromonas aromatica (strain RCB)).